The chain runs to 280 residues: Phosphate import ATP-binding protein PstB (280 aa).

Positions I34–I275 constitute an ABC transporter domain. G66–S73 is a binding site for ATP.

It belongs to the ABC transporter superfamily. Phosphate importer (TC 3.A.1.7) family. As to quaternary structure, the complex is composed of two ATP-binding proteins (PstB), two transmembrane proteins (PstC and PstA) and a solute-binding protein (PstS).

It is found in the cell inner membrane. It catalyses the reaction phosphate(out) + ATP + H2O = ADP + 2 phosphate(in) + H(+). Its function is as follows. Part of the ABC transporter complex PstSACB involved in phosphate import. Responsible for energy coupling to the transport system. This is Phosphate import ATP-binding protein PstB from Burkholderia mallei (strain ATCC 23344).